Here is a 424-residue protein sequence, read N- to C-terminus: Probable carboxypeptidase AN5749 (424 aa).

A signal peptide spans 1-17 (MNLSILAALALVSFSTA). Residue asparagine 58 is glycosylated (N-linked (GlcNAc...) asparagine). Residue aspartate 139 participates in Zn(2+) binding. Glutamate 171 functions as the Proton acceptor in the catalytic mechanism. Glutamate 172 provides a ligand contact to Zn(2+). N-linked (GlcNAc...) asparagine glycans are attached at residues asparagine 184 and asparagine 323.

Belongs to the peptidase M20A family. The cofactor is Zn(2+).

It is found in the secreted. The polypeptide is Probable carboxypeptidase AN5749 (Emericella nidulans (strain FGSC A4 / ATCC 38163 / CBS 112.46 / NRRL 194 / M139) (Aspergillus nidulans)).